The following is a 423-amino-acid chain: Cop9 signalosome complex subunit 12 (423 aa).

Residues 232-418 enclose the PCI domain; sequence GFFHLNEALL…RCIVFSKKEP (187 aa).

The protein belongs to the CSN12 family. As to quaternary structure, component of a COP9 signalosome-like (CSN) complex, composed of RRI1/CSN5, CSN9, RRI2/CSN10, PCI8/CSN11, CSN12 and CSI1. In the complex, it probably interacts directly with RRI1/CSN5, CSN9, RRI2/CSN10 and CSI1. Interacts with SEM1 and THP3.

The protein localises to the cytoplasm. It localises to the nucleus. Its function is as follows. Component of the COP9 signalosome (CSN) complex that acts as an regulator of the ubiquitin (Ubl) conjugation pathway by mediating the deneddylation of the cullin subunit of SCF-type E3 ubiquitin-protein ligase complexes. The CSN complex is involved in the regulation of the mating pheromone response. CSN12 forms a complex with THP3 that is recruited to transcribed genes and required for transcription elongation. In Saccharomyces cerevisiae (strain ATCC 204508 / S288c) (Baker's yeast), this protein is Cop9 signalosome complex subunit 12 (CSN12).